The primary structure comprises 290 residues: MESDLTVEESETIKTRSRRPLTEHRRHSLLPLQWKLAHSSRWMAQVVASEFSLLAFLLLLLMVFSKKWLYPSKSRFHQRYPQNITKRVYTSIHSMSTGLLYICISKSCLSSDNEEDNFKMWTIHPAFGVAKISFILAVGLGFVLTVWLHLPYLPCLQRMPFFGLIGIILSFCEVTLIFLTLLLFPVNLWIYELKKNISVPIGWSYFIGWLVLILYLTCGILCYLNHKNFWSLIMSSSSINATCSSSVPVSLMNTSQISKSQADILDPTQDDQKPLSSDNIALPPNPDTTD.

Serine 28 carries the post-translational modification Phosphoserine. Helical transmembrane passes span alanine 44–phenylalanine 64, isoleucine 132–tyrosine 152, leucine 164–phenylalanine 184, and isoleucine 201–leucine 221. Residues alanine 262–aspartate 290 are disordered.

The protein localises to the membrane. Its function is as follows. Component of the outer dense fibers (ODF) of spermatozoa which could be involved in sperm tail structure, sperm movement and general organization of cellular cytoskeleton. This chain is Outer dense fiber protein 4 (Odf4), found in Rattus norvegicus (Rat).